The primary structure comprises 171 residues: Translation initiation factor IF-3 (171 aa).

This sequence belongs to the IF-3 family. In terms of assembly, monomer.

The protein localises to the cytoplasm. IF-3 binds to the 30S ribosomal subunit and shifts the equilibrium between 70S ribosomes and their 50S and 30S subunits in favor of the free subunits, thus enhancing the availability of 30S subunits on which protein synthesis initiation begins. The chain is Translation initiation factor IF-3 from Listeria innocua serovar 6a (strain ATCC BAA-680 / CLIP 11262).